The sequence spans 94 residues: Integration host factor subunit beta (94 aa).

The protein belongs to the bacterial histone-like protein family. In terms of assembly, heterodimer of an alpha and a beta chain.

In terms of biological role, this protein is one of the two subunits of integration host factor, a specific DNA-binding protein that functions in genetic recombination as well as in transcriptional and translational control. This chain is Integration host factor subunit beta, found in Actinobacillus succinogenes (strain ATCC 55618 / DSM 22257 / CCUG 43843 / 130Z).